A 2080-amino-acid polypeptide reads, in one-letter code: Dysferlin (2080 aa).

Residues 1 to 101 (MLRVFILYAE…LATPSLSASF (101 aa)) enclose the C2 1 domain. Residues 1-2046 (MLRVFILYAE…FILWRRFRWA (2046 aa)) lie on the Cytoplasmic side of the membrane. Positions 18, 19, 21, and 40 each coordinate Ca(2+). Residues 132–144 (LFPPPTPLEPSPT) show a composition bias toward pro residues. Residues 132-215 (LFPPPTPLEP…APTSRKLLSD (84 aa)) are disordered. Residues 155–172 (GGEEDTEDQGLTGDEAEP) are compositionally biased toward acidic residues. A Phosphothreonine modification is found at T166. 2 positions are modified to phosphoserine: T166 and G167. 2 positions are modified to phosphothreonine: Y197 and P198. 6 C2 domains span residues 203–321 (KRSA…RKWL), 360–496 (DKED…EEEP), 1136–1262 (GVNR…PLTR), 1310–1438 (PPPQ…AESP), 1561–1679 (PMPP…ARCG), and 1795–1943 (GRPG…KKCS). Ca(2+) is bound by residues D1168, D1174, D1230, and D1232. Residues D1594, D1600, D1649, D1651, D1914, S1917, and D1920 each coordinate Ca(2+). A disordered region spans residues 1995–2017 (SEHEERPAGQGRDEPNMNPKLED). The chain crosses the membrane as a helical span at residues 2047–2067 (IILFIILFILLLFLAIFIYAF). Residues 2068–2080 (PNYAAMKLVKPFS) are Extracellular-facing.

The protein belongs to the ferlin family. In terms of assembly, interacts with CACNA1S. Interacts with ANXA1; the interaction is Ca(2+)- and injury state-dependent. Interacts with ANXA2; the interaction is Ca(2+)- and injury state-dependent. Interacts with CACNA1S and PARVB. Interacts with TRIM72/MG53; interaction is required for transport to sites of cell injury during repair patch formation. Interacts with RIPOR2; this interaction occurs during early myogenic differentiation. Interacts with CAV3 and PARVB. Interacts with AHNAK; the interaction is direct and Ca(2+)-independent. Interacts with AHNAK2; the interaction is direct and Ca(2+)-independent. The cofactor is Ca(2+). As to expression, expressed in skeletal muscle, myoblast, myotube and in the syncytiotrophoblast (STB) of the placenta (at protein level). Ubiquitous. Highly expressed in skeletal muscle. Also found in heart, brain, spleen, intestine, placenta and at lower levels in liver, lung, kidney and pancreas.

It localises to the cell membrane. The protein localises to the sarcolemma. It is found in the cytoplasmic vesicle membrane. In terms of biological role, key calcium ion sensor involved in the Ca(2+)-triggered synaptic vesicle-plasma membrane fusion. Plays a role in the sarcolemma repair mechanism of both skeletal muscle and cardiomyocytes that permits rapid resealing of membranes disrupted by mechanical stress. This chain is Dysferlin (DYSF), found in Homo sapiens (Human).